The chain runs to 274 residues: Large ribosomal subunit protein uL2 (274 aa).

The interval 224–274 is disordered; the sequence is VAMNPVDHPHGGGEGRTSGGRHPVTPWGIPTKGYKTRRNKRSNKLIVQKRK. The span at 257–274 shows a compositional bias: basic residues; that stretch reads YKTRRNKRSNKLIVQKRK.

This sequence belongs to the universal ribosomal protein uL2 family. In terms of assembly, part of the 50S ribosomal subunit. Forms a bridge to the 30S subunit in the 70S ribosome.

Functionally, one of the primary rRNA binding proteins. Required for association of the 30S and 50S subunits to form the 70S ribosome, for tRNA binding and peptide bond formation. It has been suggested to have peptidyltransferase activity; this is somewhat controversial. Makes several contacts with the 16S rRNA in the 70S ribosome. The protein is Large ribosomal subunit protein uL2 of Francisella tularensis subsp. tularensis (strain FSC 198).